Consider the following 447-residue polypeptide: Cysteine--tRNA ligase (447 aa).

Position 28 (C28) interacts with Zn(2+). Residues 30–40 carry the 'HIGH' region motif; it reads PTVYNYIHVGN. 3 residues coordinate Zn(2+): C211, H236, and E240. The short motif at 268–272 is the 'KMSKS' region element; that stretch reads KMSKS. Residue K271 participates in ATP binding.

The protein belongs to the class-I aminoacyl-tRNA synthetase family. As to quaternary structure, monomer. It depends on Zn(2+) as a cofactor.

The protein resides in the cytoplasm. It catalyses the reaction tRNA(Cys) + L-cysteine + ATP = L-cysteinyl-tRNA(Cys) + AMP + diphosphate. The polypeptide is Cysteine--tRNA ligase (Streptococcus pneumoniae serotype 4 (strain ATCC BAA-334 / TIGR4)).